The chain runs to 1085 residues: Cell wall protein IFF6 (1085 aa).

The N-terminal stretch at methionine 1 to alanine 19 is a signal peptide. Residues proline 339–glutamine 1060 form a disordered region. The span at glycine 342 to serine 528 shows a compositional bias: low complexity. A compositionally biased stretch (acidic residues) spans threonine 529–glutamate 538. Residues serine 539 to glycine 828 show a composition bias toward low complexity. 25 N-linked (GlcNAc...) asparagine glycosylation sites follow: asparagine 659, asparagine 782, asparagine 854, asparagine 860, asparagine 864, asparagine 874, asparagine 882, asparagine 886, asparagine 890, asparagine 896, asparagine 900, asparagine 910, asparagine 924, asparagine 932, asparagine 938, asparagine 952, asparagine 960, asparagine 964, asparagine 968, asparagine 976, asparagine 980, asparagine 992, asparagine 996, asparagine 1008, and asparagine 1016. Residues asparagine 847 to serine 1010 are compositionally biased toward gly residues. Positions serine 1018–glutamine 1028 are enriched in gly residues. The segment covering glycine 1031–serine 1052 has biased composition (low complexity). Asparagine 1062 is lipidated: GPI-anchor amidated asparagine. Residues serine 1063 to methionine 1085 constitute a propeptide, removed in mature form.

The protein belongs to the HYR1/IFF family. Post-translationally, the GPI-anchor is attached to the protein in the endoplasmic reticulum and serves to target the protein to the cell surface. There, the glucosamine-inositol phospholipid moiety is cleaved off and the GPI-modified mannoprotein is covalently attached via its lipidless GPI glycan remnant to the 1,6-beta-glucan of the outer cell wall layer.

The protein resides in the secreted. It is found in the cell wall. The protein localises to the membrane. In terms of biological role, GPI-anchored cell wall protein involved in cell wall organization, hyphal growth, as well as in host-fungal interaction and virulence. In Candida albicans (strain SC5314 / ATCC MYA-2876) (Yeast), this protein is Cell wall protein IFF6 (IFF6).